Reading from the N-terminus, the 207-residue chain is Germin-like protein 1 (207 aa).

The N-terminal stretch at 1-17 (MLRIIFLLSLLFALSND) is a signal peptide. Cys-23 and Cys-38 are joined by a disulfide. Residues 51–197 (FSLGTPGNTT…TTFLPPATVK (147 aa)) form the Cupin type-1 domain. Residue Asn-58 is glycosylated (N-linked (GlcNAc...) asparagine). 4 residues coordinate Mn(2+): His-99, His-101, Glu-106, and His-145.

It belongs to the germin family. In terms of assembly, oligomer (believed to be a pentamer but probably hexamer).

It localises to the secreted. The protein resides in the extracellular space. Its subcellular location is the apoplast. Its function is as follows. May play a role in plant defense. Probably has no oxalate oxidase activity even if the active site is conserved. The polypeptide is Germin-like protein 1 (GER1) (Brassica napus (Rape)).